The sequence spans 311 residues: Mediator of RNA polymerase II transcription subunit 27 (311 aa).

It belongs to the Mediator complex subunit 27 family. As to quaternary structure, component of the Mediator complex.

The protein resides in the nucleus. Its function is as follows. Component of the Mediator complex, a coactivator involved in the regulated transcription of nearly all RNA polymerase II-dependent genes. Mediator functions as a bridge to convey information from gene-specific regulatory proteins to the basal RNA polymerase II transcription machinery. Mediator is recruited to promoters by direct interactions with regulatory proteins and serves as a scaffold for the assembly of a functional preinitiation complex with RNA polymerase II and the general transcription factors. Required for the development of dopaminergic amacrine cells in the retina. May also negatively regulate the development of rod photoreceptor cells. The protein is Mediator of RNA polymerase II transcription subunit 27 (med27) of Danio rerio (Zebrafish).